The chain runs to 494 residues: Probable cytochrome P450 515A1 (494 aa).

Residues 1–21 (MILGIILGLFIYIYLINIKFF) form a helical membrane-spanning segment. Cys-440 contacts heme.

Belongs to the cytochrome P450 family. The cofactor is heme.

The protein localises to the membrane. This is Probable cytochrome P450 515A1 (cyp515A1) from Dictyostelium discoideum (Social amoeba).